The sequence spans 1001 residues: Serine/threonine-protein kinase TAO1-B (1001 aa).

A Protein kinase domain is found at 28-281 (FSDLREIGHG…SDELLKHMFV (254 aa)). ATP contacts are provided by residues 34 to 42 (IGHGSFGAV) and lysine 57. Aspartate 151 acts as the Proton acceptor in catalysis. 2 disordered regions span residues 324–435 (PAVE…YRNR) and 567–586 (KEELNENQSTPKKEKQEWLS). Residues 350–370 (SNQSIPSMSISASSQSSSVNS) show a composition bias toward low complexity. 2 stretches are compositionally biased toward basic and acidic residues: residues 375–388 (SDDKSELDMMEGDH) and 577–586 (PKKEKQEWLS). Coiled-coil stretches lie at residues 458–651 (SELR…EHAM) and 754–877 (KAVL…EIEA). The tract at residues 911–1001 (SHNPTGGPGP…ISNGSHMSYT (91 aa)) is disordered. A compositionally biased stretch (low complexity) spans 921 to 930 (HWGHPMAGPP). Composition is skewed to polar residues over residues 949–967 (GSVQGVSRGSTMGVRNSPQ) and 975–1001 (GGRTEQGMSRSTSVTSQISNGSHMSYT).

It belongs to the protein kinase superfamily. STE Ser/Thr protein kinase family. STE20 subfamily.

The protein localises to the cytoplasm. It catalyses the reaction L-seryl-[protein] + ATP = O-phospho-L-seryl-[protein] + ADP + H(+). The catalysed reaction is L-threonyl-[protein] + ATP = O-phospho-L-threonyl-[protein] + ADP + H(+). Functionally, serine/threonine-protein kinase involved in various processes such as p38/mapk14 stress-activated MAPK cascade, DNA damage response and regulation of cytoskeleton stability. Acts as an activator of the p38/MAPK14 stress-activated MAPK cascade by mediating phosphorylation and subsequent activation of upstream MAP kinase kinases. In response to DNA damage, involved in the G2/M transition DNA damage checkpoint by activating the p38/MAPK14 stress-activated MAPK cascade. This chain is Serine/threonine-protein kinase TAO1-B (taok1-b), found in Xenopus laevis (African clawed frog).